The following is a 224-amino-acid chain: Synaptonemal complex protein 3 (224 aa).

Coiled coils occupy residues 63–97 (RVKC…WEER) and 137–171 (HDSM…QSST).

Interacts with gras-1. Interacts with brc-1 and brd-1.

Its subcellular location is the chromosome. Its function is as follows. Plays a role in early meiotic events; during prophase I contributes to synaptonemal complex (SC) assembly, synapsis and chiasmata formation and stabilization of homologous chromosomes pairing. Required for restricting SC assembly to bridge paired chromosome axes. Required for the timely progression of meiotic crossover recombination. Required for the synapsis checkpoint. The polypeptide is Synaptonemal complex protein 3 (Caenorhabditis elegans).